A 367-amino-acid chain; its full sequence is tRNA-specific 2-thiouridylase MnmA (367 aa).

ATP contacts are provided by residues 13 to 20 (GLSGGVDS) and methionine 39. Positions 99–101 (NPD) are interaction with target base in tRNA. The Nucleophile role is filled by cysteine 104. Cysteine 104 and cysteine 200 are joined by a disulfide. Glycine 128 lines the ATP pocket. An interaction with tRNA region spans residues 150–152 (KDQ). Cysteine 200 serves as the catalytic Cysteine persulfide intermediate. Residues 307-308 (RY) form an interaction with tRNA region.

The protein belongs to the MnmA/TRMU family.

It is found in the cytoplasm. The enzyme catalyses S-sulfanyl-L-cysteinyl-[protein] + uridine(34) in tRNA + AH2 + ATP = 2-thiouridine(34) in tRNA + L-cysteinyl-[protein] + A + AMP + diphosphate + H(+). Its function is as follows. Catalyzes the 2-thiolation of uridine at the wobble position (U34) of tRNA, leading to the formation of s(2)U34. The chain is tRNA-specific 2-thiouridylase MnmA from Neisseria gonorrhoeae (strain ATCC 700825 / FA 1090).